The following is a 279-amino-acid chain: Ribosomal RNA small subunit methyltransferase A (279 aa).

The S-adenosyl-L-methionine site is built by His15, Leu17, Gly42, Glu64, Asp89, and Asn109.

Belongs to the class I-like SAM-binding methyltransferase superfamily. rRNA adenine N(6)-methyltransferase family. RsmA subfamily.

Its subcellular location is the cytoplasm. It carries out the reaction adenosine(1518)/adenosine(1519) in 16S rRNA + 4 S-adenosyl-L-methionine = N(6)-dimethyladenosine(1518)/N(6)-dimethyladenosine(1519) in 16S rRNA + 4 S-adenosyl-L-homocysteine + 4 H(+). In terms of biological role, specifically dimethylates two adjacent adenosines (A1518 and A1519) in the loop of a conserved hairpin near the 3'-end of 16S rRNA in the 30S particle. May play a critical role in biogenesis of 30S subunits. This chain is Ribosomal RNA small subunit methyltransferase A, found in Prochlorococcus marinus (strain SARG / CCMP1375 / SS120).